Reading from the N-terminus, the 437-residue chain is UDP-glucose 6-dehydrogenase (437 aa).

Residues V11, D30, K35, T86, T122, and E155 each coordinate NAD(+). Substrate is bound by residues 151–155, K209, N213, 254–258, and G262; these read EFLRE and FLHAG. Residue C265 is the Nucleophile of the active site. An NAD(+)-binding site is contributed by K268. Position 326 (K326) interacts with substrate. R333 provides a ligand contact to NAD(+).

This sequence belongs to the UDP-glucose/GDP-mannose dehydrogenase family.

The catalysed reaction is UDP-alpha-D-glucose + 2 NAD(+) + H2O = UDP-alpha-D-glucuronate + 2 NADH + 3 H(+). Its pathway is nucleotide-sugar biosynthesis; UDP-alpha-D-glucuronate biosynthesis; UDP-alpha-D-glucuronate from UDP-alpha-D-glucose: step 1/1. It participates in capsule biogenesis; capsule polysaccharide biosynthesis. This Rhizobium meliloti (strain 1021) (Ensifer meliloti) protein is UDP-glucose 6-dehydrogenase.